The chain runs to 395 residues: Protein BUR2 (395 aa).

2 disordered regions span residues 1-31 (MSAT…ASSG) and 372-395 (AKQE…KPKI). At Ser-24 the chain carries Phosphoserine.

In terms of assembly, belongs to the BUR kinase complex composed of SGV1/BUR1 and BUR2. Interacts with SGV1.

The protein resides in the nucleus. Functionally, component of the BUR kinase complex involved in transcription regulation. This complex phosphorylates 'Ser-120' of the UBC2/RAD6 ubiquitin-conjugating enzyme (E2), leading to monoubiquitination of histone H2B, the localization of the PAF1 complex to the chromatin, and the silencing of telomeric-associated genes. Also required for histone H3 'Lys-4' trimethylation. May phosphorylate the 'Ser-5' of the RBP1 carboxy-terminal domain (CTD) repeats. Necessary for the recovery from pheromone-induced growth arrest in the cell cycle G1 phase. Also required for vegetative growth itself. The kinase activity of the complex requires the presence of BUR2. Overexpression of BUR2 interferes with mitotic chromosome segregation. The sequence is that of Protein BUR2 (BUR2) from Saccharomyces cerevisiae (strain ATCC 204508 / S288c) (Baker's yeast).